Consider the following 143-residue polypeptide: Large ribosomal subunit protein uL16 (143 aa).

A compositionally biased stretch (basic residues) spans 1-14; sequence MLTPKRVKWRRQHR. The segment at 1–23 is disordered; sequence MLTPKRVKWRRQHRPDRAGKAKG.

This sequence belongs to the universal ribosomal protein uL16 family. As to quaternary structure, part of the 50S ribosomal subunit.

Binds 23S rRNA and is also seen to make contacts with the A and possibly P site tRNAs. The polypeptide is Large ribosomal subunit protein uL16 (Desulforudis audaxviator (strain MP104C)).